The following is a 297-amino-acid chain: Polyamine aminopropyltransferase 2 (297 aa).

One can recognise a PABS domain in the interval F26 to K258. Residue Q53 participates in S-methyl-5'-thioadenosine binding. 2 residues coordinate spermidine: H84 and E108. S-methyl-5'-thioadenosine is bound by residues D128 and D157–V158. D176 serves as the catalytic Proton acceptor. Residue P184 participates in S-methyl-5'-thioadenosine binding.

Belongs to the spermidine/spermine synthase family. Homodimer or homotetramer.

The protein resides in the cytoplasm. The enzyme catalyses S-adenosyl 3-(methylsulfanyl)propylamine + putrescine = S-methyl-5'-thioadenosine + spermidine + H(+). It functions in the pathway amine and polyamine biosynthesis; spermidine biosynthesis; spermidine from putrescine: step 1/1. Catalyzes the irreversible transfer of a propylamine group from the amino donor S-adenosylmethioninamine (decarboxy-AdoMet) to putrescine (1,4-diaminobutane) to yield spermidine. The polypeptide is Polyamine aminopropyltransferase 2 (Caldanaerobacter subterraneus subsp. tengcongensis (strain DSM 15242 / JCM 11007 / NBRC 100824 / MB4) (Thermoanaerobacter tengcongensis)).